Here is an 81-residue protein sequence, read N- to C-terminus: Omega-conotoxin-like TxO4 (81 aa).

Positions 1–22 are cleaved as a signal peptide; the sequence is MKLTCVVIVAVLFLTAWTFVTA. Positions 23–52 are excised as a propeptide; that stretch reads VPHSSNALENLYLKARHEMENPEASKLNTR. Cystine bridges form between Cys-55-Cys-72, Cys-62-Cys-76, and Cys-71-Cys-80. Pro-70 is subject to 4-hydroxyproline; partial. Trp-75 is modified (6'-bromotryptophan; partial).

This sequence belongs to the conotoxin O1 superfamily. TxO4 is found with and without hydroxyproline and these two forms have a bromotryptophan. Truncated TxO4 is found with and without bromotryptophan, and these two forms have no hydroxyproline. As to expression, expressed by the venom duct.

It localises to the secreted. In terms of biological role, omega-conotoxins act at presynaptic membranes, they bind and block voltage-gated calcium channels (Cav). This Conus textile (Cloth-of-gold cone) protein is Omega-conotoxin-like TxO4.